The following is a 279-amino-acid chain: 4-deoxy-L-threo-5-hexosulose-uronate ketol-isomerase (279 aa).

4 residues coordinate Zn(2+): His197, His199, Glu204, and His246.

The protein belongs to the KduI family. The cofactor is Zn(2+).

The catalysed reaction is 5-dehydro-4-deoxy-D-glucuronate = 3-deoxy-D-glycero-2,5-hexodiulosonate. The protein operates within glycan metabolism; pectin degradation; 2-dehydro-3-deoxy-D-gluconate from pectin: step 4/5. Catalyzes the isomerization of 5-dehydro-4-deoxy-D-glucuronate to 3-deoxy-D-glycero-2,5-hexodiulosonate. The chain is 4-deoxy-L-threo-5-hexosulose-uronate ketol-isomerase from Kineococcus radiotolerans (strain ATCC BAA-149 / DSM 14245 / SRS30216).